The following is a 427-amino-acid chain: UDP-N-acetyl-D-mannosamine dehydrogenase (427 aa).

NAD(+)-binding residues include Tyr19, Ile20, Asp39, Arg44, Thr91, and Thr130. 8 residues coordinate UDP-N-acetyl-alpha-D-mannosaminouronate: Arg155, Val156, Lys207, Asn211, Arg214, His245, Arg247, and Gly258. The Proton donor/acceptor role is filled by Lys207. The active-site Nucleophile is Cys261. Residues Tyr318 and Lys319 each contribute to the UDP-N-acetyl-alpha-D-mannosaminouronate site. Arg326 contributes to the NAD(+) binding site. Lys404 lines the UDP-N-acetyl-alpha-D-mannosaminouronate pocket.

The protein belongs to the UDP-glucose/GDP-mannose dehydrogenase family. In terms of assembly, homotetramer; probably dimer of dimers.

It carries out the reaction UDP-N-acetyl-alpha-D-mannosamine + 2 NAD(+) + H2O = UDP-N-acetyl-alpha-D-mannosaminouronate + 2 NADH + 3 H(+). Its function is as follows. Catalyzes the four-electron oxidation of UDP-N-acetyl-D-mannosamine (UDP-ManNAc), reducing NAD(+) and releasing UDP-N-acetylmannosaminuronic acid (UDP-ManNAcA). The sequence is that of UDP-N-acetyl-D-mannosamine dehydrogenase (wecC) from Methanococcus vannielii (strain ATCC 35089 / DSM 1224 / JCM 13029 / OCM 148 / SB).